The chain runs to 417 residues: Serine hydroxymethyltransferase (417 aa).

(6S)-5,6,7,8-tetrahydrofolate contacts are provided by residues L119 and 123–125 (GHL). K227 bears the N6-(pyridoxal phosphate)lysine mark.

This sequence belongs to the SHMT family. Homodimer. It depends on pyridoxal 5'-phosphate as a cofactor.

It is found in the cytoplasm. The enzyme catalyses (6R)-5,10-methylene-5,6,7,8-tetrahydrofolate + glycine + H2O = (6S)-5,6,7,8-tetrahydrofolate + L-serine. Its pathway is one-carbon metabolism; tetrahydrofolate interconversion. The protein operates within amino-acid biosynthesis; glycine biosynthesis; glycine from L-serine: step 1/1. Catalyzes the reversible interconversion of serine and glycine with tetrahydrofolate (THF) serving as the one-carbon carrier. This reaction serves as the major source of one-carbon groups required for the biosynthesis of purines, thymidylate, methionine, and other important biomolecules. Also exhibits THF-independent aldolase activity toward beta-hydroxyamino acids, producing glycine and aldehydes, via a retro-aldol mechanism. The protein is Serine hydroxymethyltransferase of Buchnera aphidicola subsp. Cinara cedri (strain Cc).